A 131-amino-acid polypeptide reads, in one-letter code: Large ribosomal subunit protein bL12 (131 aa).

This sequence belongs to the bacterial ribosomal protein bL12 family. Homodimer. Part of the ribosomal stalk of the 50S ribosomal subunit. Forms a multimeric L10(L12)X complex, where L10 forms an elongated spine to which 2 to 4 L12 dimers bind in a sequential fashion. Binds GTP-bound translation factors.

Its function is as follows. Forms part of the ribosomal stalk which helps the ribosome interact with GTP-bound translation factors. Is thus essential for accurate translation. The protein is Large ribosomal subunit protein bL12 of Prochlorococcus marinus (strain MIT 9515).